We begin with the raw amino-acid sequence, 391 residues long: O-methyltransferase ATR12 (391 aa).

S-adenosyl-L-methionine contacts are provided by residues 233-234, D259, and 279-280; these read GG and DF. H299 functions as the Proton acceptor in the catalytic mechanism.

Belongs to the class I-like SAM-binding methyltransferase superfamily. Cation-independent O-methyltransferase family. COMT subfamily.

Its pathway is mycotoxin biosynthesis. O-methyltransferase; part of the core atranone cluster (CAC) which products are predicted to catalyze most or all steps of mycotoxin atranone synthesis, starting from geranylgeranyl pyrophosphate (GGPP). The initial cyclization of GGPP to dolabellane is probably performed by the terpene cyclase ATR13. The Baeyer-Villiger oxidation near the end of the atranone synthesis, which converts atranones D and E to atranones F and G is predicted to be catalyzed by the monooxygenase ATR8. Of the CAC's other predicted gene products, the reducing PKS ATR6 might synthesize a polyketide chain. This polyketide is probably transferred onto the atranone backbone by the polyketide transferase ATR5. Other predicted CAC products include 4 oxygenases (ATR2, ATR3, ATR4, and ATR14), 3 short-chain reductases (ATR7, ATR9, and ATR10), and a methyltransferase (ATR12). These may all be involved in the various steps of atranone biosynthesis, although their specific roles must await experimental determination. This is O-methyltransferase ATR12 from Stachybotrys chlorohalonatus (strain IBT 40285).